The chain runs to 300 residues: Interferon-stimulated gene 20 kDa protein (300 aa).

Positions 11, 13, 90, and 93 each coordinate Mn(2+).

It belongs to the exonuclease superfamily. Associates with PML and SP100 in the PML NB complex. Associates with survival motor neuron protein (SMN)-containing macromolecular nuclear complexes and U1 and U2 snRNAs and U3 snoRNA. Mn(2+) serves as cofactor.

It is found in the nucleus. The protein resides in the nucleolus. The protein localises to the cytoplasm. It localises to the cajal body. Its subcellular location is the P-body. The catalysed reaction is Exonucleolytic cleavage in the 3'- to 5'-direction to yield nucleoside 5'-phosphates.. Interferon-induced antiviral exoribonuclease that acts mainly on single-stranded RNA. Inhibition of several viruses does not involve the degradation of viral RNAs, but rather the inhibition of translation of viral proteins. Exerts a translational control over a large panel of non-self RNA substrates while sparing endogenous transcripts. This activity correlates with the protein's ability to localize in cytoplasmic processing bodies. May also act as master regulator of over hundred interferon stimulated genes leading to viral genome translation inhibition. May play additional roles in the maturation of snRNAs and rRNAs, and in ribosome biogenesis. The sequence is that of Interferon-stimulated gene 20 kDa protein (Isg20) from Mus musculus (Mouse).